A 242-amino-acid polypeptide reads, in one-letter code: MANFVLVHGAWHGGWCYRDTAAALRKAGHRVLTPTHTGVGQRAHLSGENVTLETHIRDVLGCIEAEELDDVILVGHSYGGMVITGVADRIAPKIRSLVYLDAFVPEHGDSLMALLPKALPPEVSAQFIGGFHAAALDKHCGLMQPIPAELFNVVADKRDWVNRRCVPQALATYEMPLLLAGGGSAVKQRVYILADGWDPSPFRYFAKLYDGKPGWQVVKFPCGHDVMVDMPNELAEKLAALG.

The active-site Acyl-ester intermediate is S77.

The protein belongs to the AB hydrolase superfamily.

The protein localises to the secreted. The enzyme catalyses carbendazim + H2O = 2-aminobenzimidazole + methanol + CO2. It carries out the reaction carbendazim + H2O = N-(1H-1,3-benzodiazol-2-yl)carbamate + methanol + H(+). It catalyses the reaction N-(1H-1,3-benzodiazol-2-yl)carbamate + H(+) = 2-aminobenzimidazole + CO2. Catalyzes the hydrolysis of the fungicide carbendazim (methyl-1H-benzimidazol-2-ylcarbamate or MBC) to 2-aminobenzimidazole (2-AB). Following hydrolysis of the carbamate ester, the carbamate decarboxylates spontaneously. Can hydrolyze model carboxylesters such as methyl salicylate, alpha-naphthyl acetate and p-nitrophenyl acetate. In addition, shows substantial hydrolytic activity in vitro against widespread pollutants with carboxylester, carbamate and amide linkages, such as dimethyl phthalate, propanil and chlorpropham. This is Carbendazim hydrolyzing esterase from Nocardioides sp. (strain SG-4G).